The chain runs to 287 residues: Elongation factor Ts (287 aa).

Positions 80–83 are involved in Mg(2+) ion dislocation from EF-Tu; it reads TDFL.

This sequence belongs to the EF-Ts family.

It localises to the cytoplasm. Its function is as follows. Associates with the EF-Tu.GDP complex and induces the exchange of GDP to GTP. It remains bound to the aminoacyl-tRNA.EF-Tu.GTP complex up to the GTP hydrolysis stage on the ribosome. The protein is Elongation factor Ts of Pseudomonas putida (strain ATCC 700007 / DSM 6899 / JCM 31910 / BCRC 17059 / LMG 24140 / F1).